Consider the following 110-residue polypeptide: Guanine nucleotide-binding protein subunit gamma (110 aa).

Cysteine 106 carries S-palmitoyl cysteine lipidation. Position 107 is a cysteine methyl ester (cysteine 107). Cysteine 107 carries the S-farnesyl cysteine lipid modification. Residues 108-110 (TLM) constitute a propeptide, removed in mature form.

The protein belongs to the G protein gamma family. As to quaternary structure, g proteins are composed of 3 units, alpha, beta and gamma. The beta-gamma subunit complex (STE4-STE18 complex) interacts with PLP1 and PLP2.

The protein localises to the membrane. In terms of biological role, implicated in the pheromone A- and alpha-factor response pathway. The beta and gamma chains of the putative yeast mating response pathway G protein play a positive role in initiation of the mating response. This is Guanine nucleotide-binding protein subunit gamma (STE18) from Saccharomyces cerevisiae (strain ATCC 204508 / S288c) (Baker's yeast).